The following is a 211-amino-acid chain: Protein-methionine-sulfoxide reductase heme-binding subunit MsrQ (211 aa).

A run of 6 helical transmembrane segments spans residues Val-8–Trp-28, Phe-54–Ile-74, Leu-82–Val-102, Pro-116–Thr-136, Phe-153–Ser-173, and Ile-178–Phe-198.

This sequence belongs to the MsrQ family. Heterodimer of a catalytic subunit (MsrP) and a heme-binding subunit (MsrQ). Requires FMN as cofactor. The cofactor is heme b.

The protein localises to the cell inner membrane. In terms of biological role, part of the MsrPQ system that repairs oxidized periplasmic proteins containing methionine sulfoxide residues (Met-O), using respiratory chain electrons. Thus protects these proteins from oxidative-stress damage caused by reactive species of oxygen and chlorine generated by the host defense mechanisms. MsrPQ is essential for the maintenance of envelope integrity under bleach stress, rescuing a wide series of structurally unrelated periplasmic proteins from methionine oxidation, including the primary periplasmic chaperone SurA and the lipoprotein Pal. MsrQ provides electrons for reduction to the reductase catalytic subunit MsrP, using the quinone pool of the respiratory chain. The chain is Protein-methionine-sulfoxide reductase heme-binding subunit MsrQ from Shigella flexneri.